Here is a 155-residue protein sequence, read N- to C-terminus: Catabolic 3-dehydroquinase (155 aa).

The Proton acceptor role is filled by Y24. Substrate-binding residues include N75, H81, and D88. H101 functions as the Proton donor in the catalytic mechanism. Residues 102-103 (VS) and R112 each bind substrate.

Belongs to the type-II 3-dehydroquinase family. Homododecamer. Adopts a ring-like structure, composed of an arrangement of two hexameric rings stacked on top of one another.

The enzyme catalyses 3-dehydroquinate = 3-dehydroshikimate + H2O. Its pathway is aromatic compound metabolism; 3,4-dihydroxybenzoate biosynthesis; 3,4-dihydroxybenzoate from 3-dehydroquinate: step 1/2. Functionally, is involved in the catabolism of quinate. Allows the utilization of quinate as carbon source via the beta-ketoadipate pathway. The sequence is that of Catabolic 3-dehydroquinase from Penicillium rubens (strain ATCC 28089 / DSM 1075 / NRRL 1951 / Wisconsin 54-1255) (Penicillium chrysogenum).